Consider the following 1461-residue polypeptide: Pleiotropic drug resistance protein 2 (1461 aa).

Positions 172–445 (LGLIHLSPSK…FEYMGFRCPE (274 aa)) constitute an ABC transporter 1 domain. Residue 205–212 (GPPGSGKT) coordinates ATP. An ABC transmembrane type-2 1 domain is found at 523–736 (ELFKSCFTRE…GQNAIAINEF (214 aa)). Helical transmembrane passes span 541 to 561 (FLYIFKTTQITIMATIALTVF), 577 to 597 (FWGALFFSLINVMFNGMQELA), 622 to 642 (LPIWVLKIPISLVESAIWIIL), 660 to 680 (LLAFIGVHQMALSLFRFIAAA), 685 to 705 (VVANTLGTFTLLMVFILGGFI), and 771 to 791 (ISIGALFGFSLLFNVLFIAAL). Positions 859 to 1111 (LAFNHVNYYV…KLVEYFETIP (253 aa)) constitute an ABC transporter 2 domain. Position 904-911 (904-911 (GVSGAGKT)) interacts with ATP. An ABC transmembrane type-2 2 domain is found at 1184 to 1398 (TQCKACFWKQ…TIYGIFASQV (215 aa)). A run of 7 helical transmembrane segments spans residues 1203 to 1223 (YNAIRFFMTVIIGILFGVIFW), 1243 to 1263 (YAAVMFLGATNASAVQSVVAI), 1291 to 1311 (TIYVAIQTFVYSLLLFSMIGY), 1321 to 1341 (FYYFIFMCFTYFSMYGMMVVA), 1348 to 1368 (IAAIVMSFFLSFWNLFSGFLI), 1379 to 1399 (WYYWASPVAWTIYGIFASQVG), and 1430 to 1450 (FLLVVVFAHVGWVLLFFFVFA).

The protein belongs to the ABC transporter superfamily. ABCG family. PDR (TC 3.A.1.205) subfamily.

The protein localises to the membrane. In terms of biological role, may be a general defense protein. In Nicotiana plumbaginifolia (Leadwort-leaved tobacco), this protein is Pleiotropic drug resistance protein 2 (PDR2).